A 220-amino-acid chain; its full sequence is Large ribosomal subunit protein eL15 (220 aa).

Over residues 197-207 (KKRHEASRGAR) the composition is skewed to basic and acidic residues. A disordered region spans residues 197 to 220 (KKRHEASRGARDPWQIAEKLKEEK).

The protein belongs to the eukaryotic ribosomal protein eL15 family.

The protein is Large ribosomal subunit protein eL15 of Desulfurococcus amylolyticus (strain DSM 18924 / JCM 16383 / VKM B-2413 / 1221n) (Desulfurococcus kamchatkensis).